Here is a 488-residue protein sequence, read N- to C-terminus: Ribulose bisphosphate carboxylase large chain (488 aa).

Positions 127 and 177 each coordinate substrate. Lysine 179 (proton acceptor) is an active-site residue. Residue lysine 181 coordinates substrate. 3 residues coordinate Mg(2+): lysine 205, aspartate 207, and glutamate 208. The residue at position 205 (lysine 205) is an N6-carboxylysine. Histidine 297 serves as the catalytic Proton acceptor. Arginine 298, histidine 330, and serine 382 together coordinate substrate.

This sequence belongs to the RuBisCO large chain family. Type I subfamily. In terms of assembly, heterohexadecamer of 8 large chains and 8 small chains. Mg(2+) serves as cofactor.

Its subcellular location is the plastid. It localises to the chloroplast. It catalyses the reaction 2 (2R)-3-phosphoglycerate + 2 H(+) = D-ribulose 1,5-bisphosphate + CO2 + H2O. The catalysed reaction is D-ribulose 1,5-bisphosphate + O2 = 2-phosphoglycolate + (2R)-3-phosphoglycerate + 2 H(+). RuBisCO catalyzes two reactions: the carboxylation of D-ribulose 1,5-bisphosphate, the primary event in carbon dioxide fixation, as well as the oxidative fragmentation of the pentose substrate in the photorespiration process. Both reactions occur simultaneously and in competition at the same active site. The sequence is that of Ribulose bisphosphate carboxylase large chain from Antithamnion sp. (Red alga).